We begin with the raw amino-acid sequence, 421 residues long: Testin (421 aa).

Residues Met-92–Asp-199 form the PET domain. The tract at residues Lys-134 to Cys-164 is disordered. The span at Pro-155–Cys-164 shows a compositional bias: basic and acidic residues. LIM zinc-binding domains are found at residues Tyr-234–Glu-297, Pro-299–Val-359, and Gln-362–Ser-421.

This sequence belongs to the prickle / espinas / testin family. As to quaternary structure, interacts via LIM domain 1 with ZYX. Interacts (via LIM domain 3) with ENAH and VASP. Interacts with ALKBH4, talin, actin, alpha-actinin, GRIP1 and PXN. Interacts (via LIM domain 2) with ACTL7A (via N-terminus). Heterodimer with ACTL7A; the heterodimer interacts with ENAH to form a heterotrimer.

It is found in the cytoplasm. It localises to the cell junction. The protein resides in the focal adhesion. Functionally, scaffold protein that may play a role in cell adhesion, cell spreading and in the reorganization of the actin cytoskeleton. Plays a role in the regulation of cell proliferation. May act as a tumor suppressor. In Eulemur macaco macaco (Black lemur), this protein is Testin (TES).